Consider the following 402-residue polypeptide: UDP-N-acetylmuramoylalanine--D-glutamate ligase (402 aa).

97-103 (GTNGKTT) contributes to the ATP binding site.

The protein belongs to the MurCDEF family.

The protein resides in the cytoplasm. The catalysed reaction is UDP-N-acetyl-alpha-D-muramoyl-L-alanine + D-glutamate + ATP = UDP-N-acetyl-alpha-D-muramoyl-L-alanyl-D-glutamate + ADP + phosphate + H(+). It participates in cell wall biogenesis; peptidoglycan biosynthesis. Its function is as follows. Cell wall formation. Catalyzes the addition of glutamate to the nucleotide precursor UDP-N-acetylmuramoyl-L-alanine (UMA). This Campylobacter jejuni subsp. jejuni serotype O:23/36 (strain 81-176) protein is UDP-N-acetylmuramoylalanine--D-glutamate ligase.